A 391-amino-acid polypeptide reads, in one-letter code: uncharacterized protein (391 aa).

Residues 118-149 (SINSLPPTTTTTTTTTTTTTIPNNNNNITLSP) are compositionally biased toward low complexity. Disordered regions lie at residues 118–162 (SINS…HQHP), 184–258 (QTNV…TPRN), 272–327 (NNNL…NNLN), and 337–356 (LNLN…NNNN). A compositionally biased stretch (basic residues) spans 150-162 (QHHHGQQQHHQHP). A compositionally biased stretch (low complexity) spans 186-211 (NVNNNNNNNNNNNNNNNSNNNNNNNN). Polar residues predominate over residues 212–223 (DFSTPNSFSVPT). Positions 244–256 (NTPNNSTSNPTTP) are enriched in low complexity.

This is an uncharacterized protein from Dictyostelium discoideum (Social amoeba).